Consider the following 76-residue polypeptide: UPF0291 protein GWCH70_1239 (76 aa).

The tract at residues 54-76 is disordered; that stretch reads VIDPNGNDVTPKKLKESQKSRLH. Residues 63–76 are compositionally biased toward basic and acidic residues; the sequence is TPKKLKESQKSRLH.

This sequence belongs to the UPF0291 family.

Its subcellular location is the cytoplasm. This is UPF0291 protein GWCH70_1239 from Geobacillus sp. (strain WCH70).